A 2057-amino-acid chain; its full sequence is Protein TIC 214 (2057 aa).

The next 4 membrane-spanning stretches (helical) occupy residues Lys13–Ile33, Leu62–Leu82, Leu158–Phe178, and Ser206–Gly226. Residues Leu248–Ser340 adopt a coiled-coil conformation. Residues Asn288–Thr302 show a composition bias toward basic residues. Disordered stretches follow at residues Asn288 to Thr316, Glu614 to Gly807, Asp890 to Val910, Glu1597 to Asp1634, and Lys1724 to Ser1817. Basic and acidic residues-rich tracts occupy residues Ala621–Lys657 and Asn665–Lys702. Residues Asn704–Asn713 show a composition bias toward polar residues. 2 stretches are compositionally biased toward basic and acidic residues: residues Lys714–Gly807 and Glu891–Lys900. The segment covering Glu1597–Ile1619 has biased composition (acidic residues). Residues Ser1622–Asp1634 are compositionally biased toward polar residues. The segment covering Thr1753–Ser1817 has biased composition (basic and acidic residues).

This sequence belongs to the TIC214 family. As to quaternary structure, part of the Tic complex.

Its subcellular location is the plastid. It localises to the chloroplast inner membrane. Involved in protein precursor import into chloroplasts. May be part of an intermediate translocation complex acting as a protein-conducting channel at the inner envelope. This chain is Protein TIC 214, found in Ipomoea purpurea (Common morning glory).